Reading from the N-terminus, the 1221-residue chain is Probable serine/threonine-protein kinase DDB_G0286465 (1221 aa).

Disordered regions lie at residues 1 to 37 (MTLRLDTSLKRGASRNIPPIPTFSSVSNENLSSSPYT), 104 to 133 (FSPSTGRTKNNNNNNNNNINNNNYKKNDNQ), and 173 to 263 (ENNS…NNNE). Composition is skewed to low complexity over residues 24-37 (SSVSNENLSSSPYT), 112-127 (KNNNNNNNNNINNNNY), 173-192 (ENNSQNNNNNKYQINNNMQK), and 204-263 (NNNN…NNNE). A Protein kinase domain is found at 186–627 (INNNMQKTGG…PYKLLDHPFF (442 aa)). Residue 192–200 (KTGGRNGSV) participates in ATP binding. Lys271 contacts ATP. Low complexity predominate over residues 324-344 (NVNNNNSNNNNNNSNNNITNS). Positions 324–346 (NVNNNNSNNNNNNSNNNITNSRY) are disordered. Asp448 serves as the catalytic Proton acceptor. Composition is skewed to low complexity over residues 538–550 (SPSSSSTTSTSTS) and 559–584 (DSSSSASSSSSSSSSSSSSSSSSLPK). 5 disordered regions span residues 538–604 (SPSS…PEKR), 712–782 (PNLS…KEKL), 823–858 (KFEKKQRQIQDSEKVNKNEEENQTKDDADNISPPLP), 959–1008 (KENI…SYCN), and 1105–1152 (KKQE…QQEK). Positions 591-604 (RSKDNQSKLDPEKR) are enriched in basic and acidic residues. Residues 725–738 (KKQLQQYQQQQKQQ) are compositionally biased toward low complexity. Positions 746-756 (DDEEEKEEEEK) are enriched in acidic residues. Basic and acidic residues-rich tracts occupy residues 757–769 (EKEKEKEKEKEKE) and 823–850 (KFEKKQRQIQDSEKVNKNEEENQTKDDA). Low complexity predominate over residues 959–993 (KENIINFHNNNNNNNNNNNNNNNNNNNNNNNNNNN).

It belongs to the protein kinase superfamily. Ser/Thr protein kinase family.

It carries out the reaction L-seryl-[protein] + ATP = O-phospho-L-seryl-[protein] + ADP + H(+). It catalyses the reaction L-threonyl-[protein] + ATP = O-phospho-L-threonyl-[protein] + ADP + H(+). The protein is Probable serine/threonine-protein kinase DDB_G0286465 of Dictyostelium discoideum (Social amoeba).